Reading from the N-terminus, the 290-residue chain is 6-phospho-5-dehydro-2-deoxy-D-gluconate aldolase (290 aa).

Asp-85 (proton donor) is an active-site residue. Zn(2+) contacts are provided by His-86 and His-180. Gly-181 serves as a coordination point for dihydroxyacetone phosphate. His-208 is a Zn(2+) binding site. Dihydroxyacetone phosphate is bound by residues 209-211 and 230-233; these read GAS and NINT. A Phosphothreonine modification is found at Thr-233.

Belongs to the class II fructose-bisphosphate aldolase family. IolJ subfamily. It depends on Zn(2+) as a cofactor.

The enzyme catalyses 6-phospho-5-dehydro-2-deoxy-D-gluconate = 3-oxopropanoate + dihydroxyacetone phosphate. It functions in the pathway polyol metabolism; myo-inositol degradation into acetyl-CoA; acetyl-CoA from myo-inositol: step 6/7. Its function is as follows. Produces dihydroxyacetone phosphate (DHAP or glycerone phosphate) and malonic semialdehyde (MSA or 3-oxopropanoate) from 6-phospho-5-dehydro-2-deoxy-D-gluconate (DKGP). This is 6-phospho-5-dehydro-2-deoxy-D-gluconate aldolase (iolJ) from Bacillus velezensis (strain DSM 23117 / BGSC 10A6 / LMG 26770 / FZB42) (Bacillus amyloliquefaciens subsp. plantarum).